Here is a 565-residue protein sequence, read N- to C-terminus: Urocanate hydratase (565 aa).

NAD(+) is bound by residues 61–62, Gln139, 185–187, Glu205, Arg210, 251–252, 272–276, 282–283, and Tyr331; these read GG, GMG, NA, QTSAH, and YL. Cys419 is an active-site residue. Residues 453–472 are disordered; it reads LDSGSVASPNRETESMRDGS. Positions 463–472 are enriched in basic and acidic residues; it reads RETESMRDGS. NAD(+) is bound at residue Gly501.

Belongs to the urocanase family. Requires NAD(+) as cofactor.

It is found in the cytoplasm. It carries out the reaction 4-imidazolone-5-propanoate = trans-urocanate + H2O. It participates in amino-acid degradation; L-histidine degradation into L-glutamate; N-formimidoyl-L-glutamate from L-histidine: step 2/3. Functionally, catalyzes the conversion of urocanate to 4-imidazolone-5-propionate. This chain is Urocanate hydratase, found in Pseudomonas syringae pv. tomato (strain ATCC BAA-871 / DC3000).